Here is an 80-residue protein sequence, read N- to C-terminus: Small ribosomal subunit protein bS18 (80 aa).

The protein belongs to the bacterial ribosomal protein bS18 family. In terms of assembly, part of the 30S ribosomal subunit. Forms a tight heterodimer with protein bS6.

In terms of biological role, binds as a heterodimer with protein bS6 to the central domain of the 16S rRNA, where it helps stabilize the platform of the 30S subunit. In Beijerinckia indica subsp. indica (strain ATCC 9039 / DSM 1715 / NCIMB 8712), this protein is Small ribosomal subunit protein bS18.